The following is a 123-amino-acid chain: Large ribosomal subunit protein uL14c (123 aa).

The protein belongs to the universal ribosomal protein uL14 family. As to quaternary structure, part of the 50S ribosomal subunit.

It is found in the plastid. The protein resides in the chloroplast. Its function is as follows. Binds to 23S rRNA. The chain is Large ribosomal subunit protein uL14c from Sorghum bicolor (Sorghum).